The primary structure comprises 75 residues: MLSSKGGDAKVVGDGAKSLANQLDQINKIKRKATIESQHFEKIYKLTKNPNELQDLHKRVMDSRVQFLNFGVQNF.

This is an uncharacterized protein from Orgyia pseudotsugata (Douglas-fir tussock moth).